A 347-amino-acid chain; its full sequence is 4-hydroxy-2-oxovalerate aldolase 2 (347 aa).

In terms of domain architecture, Pyruvate carboxyltransferase spans 7-259 (VRITDTSLRD…KTGIDFFDIA (253 aa)). 15 to 16 (RD) contacts substrate. Asp16 is a binding site for Mn(2+). His19 functions as the Proton acceptor in the catalytic mechanism. Residues Ser169 and His198 each contribute to the substrate site. Mn(2+)-binding residues include His198 and His200. A substrate-binding site is contributed by Tyr289.

The protein belongs to the 4-hydroxy-2-oxovalerate aldolase family.

The catalysed reaction is (S)-4-hydroxy-2-oxopentanoate = acetaldehyde + pyruvate. This chain is 4-hydroxy-2-oxovalerate aldolase 2, found in Mycobacterium marinum (strain ATCC BAA-535 / M).